The following is a 133-amino-acid chain: Small ribosomal subunit protein uS8c (133 aa).

The protein belongs to the universal ribosomal protein uS8 family. As to quaternary structure, part of the 30S ribosomal subunit.

Its subcellular location is the plastid. It localises to the chloroplast. Functionally, one of the primary rRNA binding proteins, it binds directly to 16S rRNA central domain where it helps coordinate assembly of the platform of the 30S subunit. In Chlorokybus atmophyticus (Soil alga), this protein is Small ribosomal subunit protein uS8c (rps8).